Consider the following 618-residue polypeptide: Chaperone protein HtpG (618 aa).

Residues 1 to 340 (MATKHQFQTE…SEDLPLNVSR (340 aa)) are a; substrate-binding. The tract at residues 341–545 (EILQQNKILA…KEDNNPMMAN (205 aa)) is b. The interval 546-618 (LMAQMGQKVP…ELNSLLLQSL (73 aa)) is c.

It belongs to the heat shock protein 90 family. Homodimer.

Its subcellular location is the cytoplasm. Molecular chaperone. Has ATPase activity. The chain is Chaperone protein HtpG from Helicobacter hepaticus (strain ATCC 51449 / 3B1).